Consider the following 425-residue polypeptide: MFGIDEVKIAIIGLGYVGLPLAVEFGKSRQVVGFDVNKKRILELKNGVDVNLETTEEELREARYLKFTSEIEKIKECNFYIITVPTPINTYKQPDLTPLIKASETVGTVLNRGDIVVYESTVYPGCTEEECVPILARMSGMTFNQDFYVGYSPERINPGDKKHRLTNIKKITSGSTAQIAELIDEVYQQIISAGTYKAESIKVAEAAKVIENTQRDLNIALVNELAIIFNRLNIDTEAVLRAAGSKWNFLPFRPGLVGGHCIGVDPYYLTHKSQGIGYYPEIILAGRRLNDNMGNYVSEQLIKAMIKKGINVEGSSVLILGFTFKENCPDIRNTRIIDVVKELGKYSCKVDIFDPWVDAEEVRREYGIIPVSEVKSSHYDAIIVAVGHQQFKQMGSEDIRGFGKDKHVLYDLKYVLPAEQSDVRL.

Residues valine 17, aspartate 35, arginine 40, threonine 86, and threonine 121 each contribute to the NAD(+) site. Residue cysteine 261 is the Nucleophile of the active site. Arginine 332 is an NAD(+) binding site.

This sequence belongs to the UDP-glucose/GDP-mannose dehydrogenase family. Homotrimer.

The enzyme catalyses UDP-N-acetyl-alpha-D-glucosamine + 2 NAD(+) + H2O = UDP-2-acetamido-2-deoxy-alpha-D-glucuronate + 2 NADH + 3 H(+). It functions in the pathway capsule biogenesis; capsule polysaccharide biosynthesis. Its pathway is glycan metabolism; Vi-antigen biosynthesis. Its function is as follows. Dehydrogenase required for the biosynthesis of the capsular polysaccharide, commonly referred as the Vi antigen, an important virulence factor. Catalyzes the conversion of UDP-N-acetylglucosamine (UDP-GlcNAc) to UDP-N-acetylglucosaminuronic acid (UDP-GlcNAcA). Cannot use UDP-GalNAc, UDP-Glc and UDP-Gal as substrates. This chain is UDP-N-acetyl-D-glucosamine 6-dehydrogenase, found in Salmonella typhi.